An 840-amino-acid polypeptide reads, in one-letter code: Protein translocase subunit SecA (840 aa).

Residues Gln-85, 103-107 (GEGKT), and Asp-492 each bind ATP. Residues 787–821 (QRERVAKETGASHGGDSQEIKKKPVKKEPKVGRND) are disordered. The segment covering 802–819 (DSQEIKKKPVKKEPKVGR) has biased composition (basic and acidic residues). Cys-823, Cys-825, Cys-834, and Cys-835 together coordinate Zn(2+).

It belongs to the SecA family. Monomer and homodimer. Part of the essential Sec protein translocation apparatus which comprises SecA, SecYEG and auxiliary proteins SecDF. Other proteins may also be involved. Zn(2+) is required as a cofactor.

The protein resides in the cell membrane. It localises to the cytoplasm. The enzyme catalyses ATP + H2O + cellular proteinSide 1 = ADP + phosphate + cellular proteinSide 2.. Part of the Sec protein translocase complex. Interacts with the SecYEG preprotein conducting channel. Has a central role in coupling the hydrolysis of ATP to the transfer of proteins into and across the cell membrane, serving as an ATP-driven molecular motor driving the stepwise translocation of polypeptide chains across the membrane. This is Protein translocase subunit SecA from Clostridium perfringens (strain SM101 / Type A).